Here is a 432-residue protein sequence, read N- to C-terminus: Glutamate-1-semialdehyde 2,1-aminomutase (432 aa).

An N6-(pyridoxal phosphate)lysine modification is found at lysine 267.

Belongs to the class-III pyridoxal-phosphate-dependent aminotransferase family. HemL subfamily. In terms of assembly, homodimer. It depends on pyridoxal 5'-phosphate as a cofactor.

Its subcellular location is the cytoplasm. The enzyme catalyses (S)-4-amino-5-oxopentanoate = 5-aminolevulinate. It participates in porphyrin-containing compound metabolism; protoporphyrin-IX biosynthesis; 5-aminolevulinate from L-glutamyl-tRNA(Glu): step 2/2. The chain is Glutamate-1-semialdehyde 2,1-aminomutase from Syntrophus aciditrophicus (strain SB).